The sequence spans 191 residues: Thymidylate kinase (191 aa).

7 to 14 provides a ligand contact to ATP; sequence GVDGAGKS.

This sequence belongs to the thymidylate kinase family.

The catalysed reaction is dTMP + ATP = dTDP + ADP. In terms of biological role, phosphorylation of dTMP to form dTDP in both de novo and salvage pathways of dTTP synthesis. This chain is Thymidylate kinase, found in Helicobacter pylori (strain Shi470).